The following is a 432-amino-acid chain: MEGCCMQLPTNVSSLRGTIEVPGDKSISHRAVMLGALASGRTVIDHFLPGADCLSTIDCFRKLGVDIHQDGTNVIVEGAGSGGLREPAAVLDVGNSGTTARLLLGILAGQPFHACLVGDESIAQRPMARVTKPLREMGAHIDGRDDGNYTPLAIRGGALRPLRYTSPVASAQVKSAILLAGLFTDGVTSVTEPHRSRDHTERMIRLFGGEVNVDGLTVSIAGPQSLRGTHIYVPGDISSAAFFLVAGAIVPNSEITLKNVGLNPTRTGIIDVLERMGADITIDHIRNEETEPIGDITIRTSTLHAIEIGGDIIPRLIDEIPIIALLATQAEGTTIIKDASELKVKETNRIDTVVAELKKFGADIEATDDGMIIRGKTALYADGIVVDSHGDHRIGMMLAIAACCAKGTARLERPEAVAVSYPAFFADLRSLL.

Lys-25, Ser-26, and Arg-30 together coordinate 3-phosphoshikimate. Residue Lys-25 participates in phosphoenolpyruvate binding. Phosphoenolpyruvate is bound by residues Gly-97 and Arg-125. 3-phosphoshikimate is bound by residues Ser-170, Gln-172, Asp-318, and Lys-345. Phosphoenolpyruvate is bound at residue Gln-172. Asp-318 acts as the Proton acceptor in catalysis. Residues Arg-349 and Arg-393 each coordinate phosphoenolpyruvate.

This sequence belongs to the EPSP synthase family. Monomer.

It localises to the cytoplasm. It catalyses the reaction 3-phosphoshikimate + phosphoenolpyruvate = 5-O-(1-carboxyvinyl)-3-phosphoshikimate + phosphate. Its pathway is metabolic intermediate biosynthesis; chorismate biosynthesis; chorismate from D-erythrose 4-phosphate and phosphoenolpyruvate: step 6/7. Catalyzes the transfer of the enolpyruvyl moiety of phosphoenolpyruvate (PEP) to the 5-hydroxyl of shikimate-3-phosphate (S3P) to produce enolpyruvyl shikimate-3-phosphate and inorganic phosphate. This chain is 3-phosphoshikimate 1-carboxyvinyltransferase, found in Geobacillus thermodenitrificans (strain NG80-2).